Here is a 334-residue protein sequence, read N- to C-terminus: NAC domain-containing protein 66 (334 aa).

In terms of domain architecture, NAC spans V11–K175. Residues I111–N181 mediate DNA binding.

As to expression, mostly expressed in anthers. Also present in pollen, base of siliques and inflorescence stems.

It localises to the nucleus. In terms of biological role, transcription activator of genes involved in biosynthesis of secondary walls. Together with NST1, required for the secondary cell wall thickening of the anther endocethium, which is necessary for anther dehiscence. May also regulate the secondary cell wall lignification of other tissues such as tracheary elements. The protein is NAC domain-containing protein 66 (NAC066) of Arabidopsis thaliana (Mouse-ear cress).